The sequence spans 585 residues: Protein DENND6B (585 aa).

Low complexity predominate over residues methionine 1–arginine 10. The tract at residues methionine 1–glycine 25 is disordered. Positions glutamate 43–aspartate 221 constitute a uDENN domain. The 128-residue stretch at valine 246–lysine 373 folds into the cDENN domain. In terms of domain architecture, dDENN spans leucine 375 to arginine 499.

This sequence belongs to the DENND6 family.

It localises to the recycling endosome. It is found in the cytoplasm. In terms of biological role, guanine nucleotide exchange factor (GEF) for RAB14. Also has some, lesser GEF activity towards RAB35. In Mus musculus (Mouse), this protein is Protein DENND6B (Dennd6b).